The chain runs to 486 residues: Cysteine--tRNA ligase (486 aa).

Cys-29 contributes to the Zn(2+) binding site. The 'HIGH' region motif lies at 31 to 41 (VTVYDYCHLGH). Zn(2+) contacts are provided by Cys-217, His-242, and Glu-246. The short motif at 274 to 278 (KMSKS) is the 'KMSKS' region element. Lys-277 contributes to the ATP binding site.

This sequence belongs to the class-I aminoacyl-tRNA synthetase family. As to quaternary structure, monomer. The cofactor is Zn(2+).

The protein localises to the cytoplasm. It carries out the reaction tRNA(Cys) + L-cysteine + ATP = L-cysteinyl-tRNA(Cys) + AMP + diphosphate. This Thermosynechococcus vestitus (strain NIES-2133 / IAM M-273 / BP-1) protein is Cysteine--tRNA ligase.